The sequence spans 143 residues: Ribosome-binding factor A (143 aa).

Residues 116–128 (SDDEAKQKQHGDQ) show a composition bias toward basic and acidic residues. The disordered stretch occupies residues 116 to 143 (SDDEAKQKQHGDQQDVSQSSDDKSEGED).

The protein belongs to the RbfA family. In terms of assembly, monomer. Binds 30S ribosomal subunits, but not 50S ribosomal subunits or 70S ribosomes.

It localises to the cytoplasm. In terms of biological role, one of several proteins that assist in the late maturation steps of the functional core of the 30S ribosomal subunit. Associates with free 30S ribosomal subunits (but not with 30S subunits that are part of 70S ribosomes or polysomes). Required for efficient processing of 16S rRNA. May interact with the 5'-terminal helix region of 16S rRNA. This Shewanella sediminis (strain HAW-EB3) protein is Ribosome-binding factor A.